The primary structure comprises 231 residues: MRKTRLWGLLWMFFVSELLAATKLTEEKYELKEGQTLDVKCDYMLEKFASSRKAWQIIRDGEMPQTLACTERPSHPVQVGRIILEDYHDHGLLHVRMTNLQVEDSGLYQCVIYQPPKEPHVLFDRIRLVVTKGSSGTPGSSENSTPNVYKTPPTTTKALRPLYTSPTTVTQAPPKSTADVSTPDSEINLTNVTDIIRVPVFNIAILVAGGFLSKSLVFSVLFAVTLRSFVP.

A signal peptide spans 1–20; it reads MRKTRLWGLLWMFFVSELLA. Topologically, residues 21 to 202 are extracellular; it reads ATKLTEEKYE…TDIIRVPVFN (182 aa). In terms of domain architecture, Ig-like V-type spans 26-131; the sequence is EEKYELKEGQ…LFDRIRLVVT (106 aa). Cysteines 41 and 110 form a disulfide. Polar residues-rich tracts occupy residues 134-157 and 164-182; these read SSGTPGSSENSTPNVYKTPPTTTK and TSPTTVTQAPPKSTADVST. The segment at 134-182 is disordered; the sequence is SSGTPGSSENSTPNVYKTPPTTTKALRPLYTSPTTVTQAPPKSTADVST. 2 N-linked (GlcNAc...) asparagine glycosylation sites follow: N188 and N191. Residues 203 to 223 traverse the membrane as a helical segment; the sequence is IAILVAGGFLSKSLVFSVLFA. The Cytoplasmic portion of the chain corresponds to 224–231; it reads VTLRSFVP.

As to quaternary structure, monomer. Homomultimer; when activated. Interacts with TYROBP/DAP12. Interacts with TLR4.

The protein resides in the cell membrane. Its function is as follows. Cell surface receptor that plays important roles in innate and adaptive immunity by amplifying inflammatory responses. Upon activation by various ligands such as PGLYRP1, HMGB1 or HSP70, multimerizes and forms a complex with transmembrane adapter TYROBP/DAP12. In turn, initiates a SYK-mediated cascade of tyrosine phosphorylation, activating multiple downstream mediators such as BTK, MAPK1, MAPK3 or phospholipase C-gamma. This cascade promotes the neutrophil- and macrophage-mediated release of pro-inflammatory cytokines and/or chemokines, as well as their migration and thereby amplifies inflammatory responses that are triggered by bacterial and fungal infections. By also promoting the amplification of inflammatory signals that are initially triggered by Toll-like receptor (TLR) and NOD-like receptor engagement, plays a major role in the pathophysiology of acute and chronic inflammatory diseases of different etiologies including septic shock and atherosclerosis. This chain is Triggering receptor expressed on myeloid cells 1 (TREM1), found in Pongo abelii (Sumatran orangutan).